A 328-amino-acid polypeptide reads, in one-letter code: PLASTID TRANSCRIPTIONALLY ACTIVE protein 6, chloroplastic (328 aa).

Over residues 1–14 the composition is skewed to low complexity; it reads MASSAASPSLSLLS. The disordered stretch occupies residues 1–21; it reads MASSAASPSLSLLSFTSKPPY. Residues 1–59 constitute a chloroplast transit peptide; sequence MASSAASPSLSLLSFTSKPPYPSGSQRLFASFRTDGLFAPLTLKSRRGRGIVVKVDDVD. A Nuclear localization signal motif is present at residues 267–275; sequence RKRDRKDDL. The RNA binding domain motif lies at 301 to 319; that stretch reads EREEWTKTREDMEKHLRKL.

In terms of assembly, subunit of the plastid-encoded RNA polymerase (PEP) complex. Component of a large nuclear subcomplex that may include other PEP subunits (e.g. PTAC12/HMR/PAP5, PTAC14/PAP7 and PTAC7/PAP12). Binds directly to PTAC12/HMR/PAP5 in the nucleus. Interacts with MTERF5. Mostly expressed in rosette leaves, stems and flowers, and, to a lower extent, in roots and cauline leaves.

The protein localises to the plastid. It localises to the chloroplast. The protein resides in the chloroplast thylakoid. Its subcellular location is the nucleus. It is found in the nucleoplasm. Its function is as follows. Essential protein involved in plastid gene expression and in chloroplast biogenesis. Links photomorphogenesis and chloroplast biogenesis through its dual localization; required for the formation of late photobodies in the nucleus, as well as for phytochrome B-mediated signaling cascade and subsequent reshaping of the plastid-encoded RNA polymerase (PEP) activity. Binds RNA via specific recognition motifs of viral origin. Recruited by MTERF5 to the transcriptionally paused region of psbEFLJ. Promotes leaf greening. The sequence is that of PLASTID TRANSCRIPTIONALLY ACTIVE protein 6, chloroplastic from Arabidopsis thaliana (Mouse-ear cress).